The primary structure comprises 155 residues: Transcriptional repressor NrdR (155 aa).

A zinc finger lies at 3 to 34; it reads CPFCSHFESKVVDSRPTDEGQAIRRRRECVSC. One can recognise an ATP-cone domain in the interval 49–139; sequence LIVVKKSGNR…VYREFKDINT (91 aa).

The protein belongs to the NrdR family. Zn(2+) serves as cofactor.

Functionally, negatively regulates transcription of bacterial ribonucleotide reductase nrd genes and operons by binding to NrdR-boxes. This Alkaliphilus metalliredigens (strain QYMF) protein is Transcriptional repressor NrdR.